The following is a 199-amino-acid chain: UPF0056 membrane protein bbp_399 (199 aa).

A run of 6 helical transmembrane segments spans residues 7–29, 39–58, 71–93, 108–130, 137–156, and 176–198; these read VTILLILIMDPLGNLPIFMSILK, ILIREMMIALLIMLLFLFAG, TVSVSGGIILFLIAIKMIFPTYE, FLVPLAIPLVAGPSLLATLMLLS, ILYLIGSLLIAWMITVVILL, and LMGLILIMLSTQMFLDGIKSWFY.

Belongs to the UPF0056 (MarC) family.

Its subcellular location is the cell membrane. The sequence is that of UPF0056 membrane protein bbp_399 from Buchnera aphidicola subsp. Baizongia pistaciae (strain Bp).